A 362-amino-acid chain; its full sequence is Histidine protein methyltransferase 1 homolog (362 aa).

The segment at 18-88 is disordered; the sequence is TSLDDGTCVL…EACKHQPSWK (71 aa). The segment covering 30-51 has biased composition (basic and acidic residues); sequence QKGKQDKRQSTERPGLPRDHSW. The segment covering 52–65 has biased composition (polar residues); the sequence is KCSSLGNAASSEDT. Serine 62 and serine 67 each carry phosphoserine. Residues 73-82 show a composition bias toward basic and acidic residues; that stretch reads DRSDDPEACK. Tele-methylhistidine is present on histidine 144. S-adenosyl-L-methionine-binding positions include 158–162, glycine 185, and 206–208; these read IWECT and QDY. Positions 237–243 match the Nuclear localization signal motif; sequence PDGKRQR. S-adenosyl-L-methionine contacts are provided by residues 259–261 and serine 283; that span reads GEW.

It belongs to the methyltransferase superfamily. METTL18 family. In terms of assembly, interacts with GRWD1 and members of the heat shock protein 90 and 70 families; these proteins may possibly be methylation substrates for the enzyme. Post-translationally, monomethylated at His-144 through automethylation. Automethylation at His-144 positively regulates the methyltransferase activity toward RPL3. Probably methylated on other residues.

The protein localises to the cytoplasm. The protein resides in the cytosol. It is found in the nucleus. Its subcellular location is the nucleolus. The enzyme catalyses L-histidyl-[protein] + S-adenosyl-L-methionine = N(tele)-methyl-L-histidyl-[protein] + S-adenosyl-L-homocysteine + H(+). Functionally, protein-L-histidine N-tele-methyltransferase that specifically monomethylates RPL3, thereby regulating translation elongation. Histidine methylation of RPL3 regulates translation elongation by slowing ribosome traversal on tyrosine codons: slower elongation provides enough time for proper folding of synthesized proteins and prevents cellular aggregation of tyrosine-rich proteins. The polypeptide is Histidine protein methyltransferase 1 homolog (Mus musculus (Mouse)).